A 190-amino-acid chain; its full sequence is Holliday junction branch migration complex subunit RuvA (190 aa).

Residues 1 to 63 are domain I; the sequence is MLDFIKGKVI…EESIEIYGFL (63 aa). Positions 64–139 are domain II; that stretch reads ESSERDLFEE…ILPSLQYEKD (76 aa). D139 is a region of interest (flexible linker). The segment at 139-190 is domain III; the sequence is DQKYDDILSALLNLGYKRLEAKEVLDKIYNNEKDEATIIRESLSILAGKDGK.

Belongs to the RuvA family. Homotetramer. Forms an RuvA(8)-RuvB(12)-Holliday junction (HJ) complex. HJ DNA is sandwiched between 2 RuvA tetramers; dsDNA enters through RuvA and exits via RuvB. An RuvB hexamer assembles on each DNA strand where it exits the tetramer. Each RuvB hexamer is contacted by two RuvA subunits (via domain III) on 2 adjacent RuvB subunits; this complex drives branch migration. In the full resolvosome a probable DNA-RuvA(4)-RuvB(12)-RuvC(2) complex forms which resolves the HJ.

It localises to the cytoplasm. Its function is as follows. The RuvA-RuvB-RuvC complex processes Holliday junction (HJ) DNA during genetic recombination and DNA repair, while the RuvA-RuvB complex plays an important role in the rescue of blocked DNA replication forks via replication fork reversal (RFR). RuvA specifically binds to HJ cruciform DNA, conferring on it an open structure. The RuvB hexamer acts as an ATP-dependent pump, pulling dsDNA into and through the RuvAB complex. HJ branch migration allows RuvC to scan DNA until it finds its consensus sequence, where it cleaves and resolves the cruciform DNA. In Thermodesulfovibrio yellowstonii (strain ATCC 51303 / DSM 11347 / YP87), this protein is Holliday junction branch migration complex subunit RuvA.